The primary structure comprises 460 residues: Chromosomal replication initiator protein DnaA (460 aa).

Positions 1 to 91 (MNLTSPKVST…SLWQSEDKSI (91 aa)) are domain I, interacts with DnaA modulators. The tract at residues 91–122 (IRSIDIQVIEERNSNFNVILKNREESNHNLGS) is domain II. Positions 123-342 (PLDPRFTFDN…GALNKVTHTS (220 aa)) are domain III, AAA+ region. Positions 169, 171, 172, and 173 each coordinate ATP. The domain IV, binds dsDNA stretch occupies residues 343-460 (LIGRSMTVES…EINRLKKMFK (118 aa)).

Belongs to the DnaA family. Oligomerizes as a right-handed, spiral filament on DNA at oriC.

It localises to the cytoplasm. In terms of biological role, plays an essential role in the initiation and regulation of chromosomal replication. ATP-DnaA binds to the origin of replication (oriC) to initiate formation of the DNA replication initiation complex once per cell cycle. Binds the DnaA box (a 9 base pair repeat at the origin) and separates the double-stranded (ds)DNA. Forms a right-handed helical filament on oriC DNA; dsDNA binds to the exterior of the filament while single-stranded (ss)DNA is stabiized in the filament's interior. The ATP-DnaA-oriC complex binds and stabilizes one strand of the AT-rich DNA unwinding element (DUE), permitting loading of DNA polymerase. After initiation quickly degrades to an ADP-DnaA complex that is not apt for DNA replication. Binds acidic phospholipids. The sequence is that of Chromosomal replication initiator protein DnaA from Wolbachia pipientis wMel.